The following is a 404-amino-acid chain: Cysteine desulfurase IscS (404 aa).

Pyridoxal 5'-phosphate is bound by residues 75 to 76 (AT), asparagine 155, glutamine 183, and 203 to 205 (SAH). N6-(pyridoxal phosphate)lysine is present on lysine 206. Threonine 243 is a binding site for pyridoxal 5'-phosphate. The active-site Cysteine persulfide intermediate is the cysteine 328. Residue cysteine 328 participates in [2Fe-2S] cluster binding.

Belongs to the class-V pyridoxal-phosphate-dependent aminotransferase family. NifS/IscS subfamily. As to quaternary structure, homodimer. Forms a heterotetramer with IscU, interacts with other sulfur acceptors. Pyridoxal 5'-phosphate is required as a cofactor.

It localises to the cytoplasm. It carries out the reaction (sulfur carrier)-H + L-cysteine = (sulfur carrier)-SH + L-alanine. The protein operates within cofactor biosynthesis; iron-sulfur cluster biosynthesis. In terms of biological role, master enzyme that delivers sulfur to a number of partners involved in Fe-S cluster assembly, tRNA modification or cofactor biosynthesis. Catalyzes the removal of elemental sulfur atoms from cysteine to produce alanine. Functions as a sulfur delivery protein for Fe-S cluster synthesis onto IscU, an Fe-S scaffold assembly protein, as well as other S acceptor proteins. The protein is Cysteine desulfurase IscS of Vibrio cholerae serotype O1 (strain ATCC 39541 / Classical Ogawa 395 / O395).